A 204-amino-acid chain; its full sequence is Recombination protein RecR (204 aa).

Residues Cys-61 to Cys-76 form a C4-type zinc finger. In terms of domain architecture, Toprim spans Ser-84 to Pro-183.

It belongs to the RecR family.

May play a role in DNA repair. It seems to be involved in an RecBC-independent recombinational process of DNA repair. It may act with RecF and RecO. The sequence is that of Recombination protein RecR from Polynucleobacter necessarius subsp. necessarius (strain STIR1).